Consider the following 87-residue polypeptide: MRLTALVSGHVQGVGYRLFVQRYARDLGLHGYAENLSDGKVEVIAEGDEDALNRLLHWLRRGPPHARVQAVDTQYSEETGLREFHIY.

An Acylphosphatase-like domain is found at 2-87 (RLTALVSGHV…ETGLREFHIY (86 aa)). Catalysis depends on residues arginine 17 and asparagine 35.

This sequence belongs to the acylphosphatase family.

The catalysed reaction is an acyl phosphate + H2O = a carboxylate + phosphate + H(+). This is Acylphosphatase (acyP) from Deinococcus radiodurans (strain ATCC 13939 / DSM 20539 / JCM 16871 / CCUG 27074 / LMG 4051 / NBRC 15346 / NCIMB 9279 / VKM B-1422 / R1).